A 320-amino-acid chain; its full sequence is Aspartate carbamoyltransferase catalytic subunit (320 aa).

Residues Arg-68 and Thr-69 each coordinate carbamoyl phosphate. Lys-96 contributes to the L-aspartate binding site. The carbamoyl phosphate site is built by Arg-118, His-148, and Gln-151. Positions 181 and 236 each coordinate L-aspartate. 2 residues coordinate carbamoyl phosphate: Gly-277 and Pro-278.

The protein belongs to the aspartate/ornithine carbamoyltransferase superfamily. ATCase family. As to quaternary structure, heterododecamer (2C3:3R2) of six catalytic PyrB chains organized as two trimers (C3), and six regulatory PyrI chains organized as three dimers (R2).

It carries out the reaction carbamoyl phosphate + L-aspartate = N-carbamoyl-L-aspartate + phosphate + H(+). It participates in pyrimidine metabolism; UMP biosynthesis via de novo pathway; (S)-dihydroorotate from bicarbonate: step 2/3. In terms of biological role, catalyzes the condensation of carbamoyl phosphate and aspartate to form carbamoyl aspartate and inorganic phosphate, the committed step in the de novo pyrimidine nucleotide biosynthesis pathway. The polypeptide is Aspartate carbamoyltransferase catalytic subunit (Polaromonas sp. (strain JS666 / ATCC BAA-500)).